A 233-amino-acid polypeptide reads, in one-letter code: Large ribosomal subunit protein uL1 (233 aa).

This sequence belongs to the universal ribosomal protein uL1 family. Part of the 50S ribosomal subunit.

In terms of biological role, binds directly to 23S rRNA. The L1 stalk is quite mobile in the ribosome, and is involved in E site tRNA release. Its function is as follows. Protein L1 is also a translational repressor protein, it controls the translation of the L11 operon by binding to its mRNA. The protein is Large ribosomal subunit protein uL1 of Laribacter hongkongensis (strain HLHK9).